The following is a 671-amino-acid chain: Amidase chry2 (671 aa).

Residue Cys-2 is the Nucleophile of the active site. One can recognise a Glutamine amidotransferase type-2 domain in the interval 2 to 220; it reads CGISAFITHP…PGHYLICRPN (219 aa). An Asparagine synthetase domain is found at 251-639; sequence VRERLLEAVR…TQDAMDGAFN (389 aa).

It belongs to the asparagine synthetase family.

The protein operates within pigment biosynthesis. Amidase; part of the gene cluster that mediates the biosynthesis of the yellow pigment chrysogine. Pyruvic acid and anthranilic acid are likely substrates for the nonribosomal peptide synthetase chry1/NRPS14, with pyruvic acid adenylated by the first A domain and anthranilic acid by the second. If pyruvic acid and anthranilic acid are merged and released from chry1/NRPS14 by hydrolysis, a subsequent amidation would lead to 2-pyruvoylaminobenzamide. This process is probably catalyzed by the amidotransferase chry2 using glutamine as amino donor. The dehydrogenase chry5 that has a terminal berberine bridge domain for C-N cyclization could catalyze the cyclization of 2-pyruvoylaminobenzamide to yield acetyl-4(3H)-quinazolidinone. A final reduction of acetyl-4(3H)-quinazolidinone catalyzed by the oxidoreductase chry4 would result in chrysogine. The polypeptide is Amidase chry2 (Gibberella zeae (strain ATCC MYA-4620 / CBS 123657 / FGSC 9075 / NRRL 31084 / PH-1) (Wheat head blight fungus)).